A 630-amino-acid chain; its full sequence is Arginine--tRNA ligase (630 aa).

A 'HIGH' region motif is present at residues 120–130; sequence ANPIHPLHIGH.

Belongs to the class-I aminoacyl-tRNA synthetase family.

The protein localises to the cytoplasm. The enzyme catalyses tRNA(Arg) + L-arginine + ATP = L-arginyl-tRNA(Arg) + AMP + diphosphate. The chain is Arginine--tRNA ligase from Pyrobaculum arsenaticum (strain DSM 13514 / JCM 11321 / PZ6).